Reading from the N-terminus, the 303-residue chain is MTSRTEAVKAYLLDLQDRICSALETEDGGARFVEDAWVREAGGGGRTRVIGDGKVIEKGGVNFSHVFGAGLPPSASAHRPELAGRGFEALGVSLVIHPYNPHVPTSHANVRFFIAEKEGEEAVWWFGGGFDLTPYYGNEEDCVHWHRVAEQACAPFGADVYPRYKAWCDRYFHLKHRGEPRGIGGLFFDDLNEWDFDTCFAFIRAIGDAYINAYLPIVQRRKDTPYTPQQREFQEYRRGRYVEFNLVYDRGTLFGLQSGGRTESILMSLPPQVRWGYDWKAAPGSEEARLTEYFLQDRDWLGQ.

Ser93 contributes to the substrate binding site. His97 and His107 together coordinate a divalent metal cation. The active-site Proton donor is His107. 109–111 (NVR) contacts substrate. The a divalent metal cation site is built by His146 and His176. Positions 241–276 (YVEFNLVYDRGTLFGLQSGGRTESILMSLPPQVRWG) are important for dimerization. A substrate-binding site is contributed by 259–261 (GGR).

Belongs to the aerobic coproporphyrinogen-III oxidase family. As to quaternary structure, homodimer. The cofactor is a divalent metal cation.

The protein localises to the cytoplasm. It catalyses the reaction coproporphyrinogen III + O2 + 2 H(+) = protoporphyrinogen IX + 2 CO2 + 2 H2O. It participates in porphyrin-containing compound metabolism; protoporphyrin-IX biosynthesis; protoporphyrinogen-IX from coproporphyrinogen-III (O2 route): step 1/1. Involved in the heme biosynthesis. Catalyzes the aerobic oxidative decarboxylation of propionate groups of rings A and B of coproporphyrinogen-III to yield the vinyl groups in protoporphyrinogen-IX. This Pseudomonas putida (strain ATCC 700007 / DSM 6899 / JCM 31910 / BCRC 17059 / LMG 24140 / F1) protein is Oxygen-dependent coproporphyrinogen-III oxidase.